Reading from the N-terminus, the 429-residue chain is UDP-N-acetylglucosamine 1-carboxyvinyltransferase (429 aa).

22 to 23 contacts phosphoenolpyruvate; it reads KN. Residue Arg-96 coordinates UDP-N-acetyl-alpha-D-glucosamine. Residue Cys-120 is the Proton donor of the active site. Residue Cys-120 is modified to 2-(S-cysteinyl)pyruvic acid O-phosphothioketal. UDP-N-acetyl-alpha-D-glucosamine is bound by residues 125 to 129, Asp-310, and Ile-332; that span reads RPVDL.

The protein belongs to the EPSP synthase family. MurA subfamily.

It is found in the cytoplasm. It carries out the reaction phosphoenolpyruvate + UDP-N-acetyl-alpha-D-glucosamine = UDP-N-acetyl-3-O-(1-carboxyvinyl)-alpha-D-glucosamine + phosphate. It participates in cell wall biogenesis; peptidoglycan biosynthesis. Its function is as follows. Cell wall formation. Adds enolpyruvyl to UDP-N-acetylglucosamine. This chain is UDP-N-acetylglucosamine 1-carboxyvinyltransferase, found in Caulobacter vibrioides (strain ATCC 19089 / CIP 103742 / CB 15) (Caulobacter crescentus).